The chain runs to 710 residues: Forkhead box protein P2 (710 aa).

The segment covering 1–28 (MMQESATETISNSSMNQNGMSTLSSQLD) has biased composition (polar residues). Disordered stretches follow at residues 1–44 (MMQE…SSEV) and 272–334 (HSQE…TGAS). Residues 273–283 (SQEDNGIKHGG) are compositionally biased toward basic and acidic residues. Residues 287-300 (TTNNSSSTTSSTTS) show a composition bias toward low complexity. Polar residues predominate over residues 310-319 (SIVNGQSSVL). Residues 321-332 (ARRDSSSHEETG) are compositionally biased toward basic and acidic residues. The C2H2-type zinc-finger motif lies at 343–366 (CKWPGCESICEDFGQFLKHLNNEH). Residues 383 to 404 (VQQLEIQLSKERERLQAMMTHL) are leucine-zipper. A CTBP1-binding region spans residues 417–421 (PLNLV). A compositionally biased stretch (low complexity) spans 433-454 (TSPQSLPQTPTTPTAPVTPITQ). Residues 433–460 (TSPQSLPQTPTTPTAPVTPITQGPSVIT) are disordered. A DNA-binding region (fork-head) is located at residues 499 to 589 (RPPFTYATLI…SQKITGSPTL (91 aa)). Disordered stretches follow at residues 644–663 (LDHIDSNGNSSPGCSPQPHI) and 673–710 (VIAEDEDCPMSLVTTANHSPELEDDREIEEEPLSEDLE). Positions 694–710 (LEDDREIEEEPLSEDLE) are enriched in acidic residues.

In terms of assembly, forms homodimers and heterodimers with FOXP1 and FOXP4. Dimerization is required for DNA-binding. Interacts with CTBP1. Interacts with FOXP1. Interacts with TBR1. Interacts with ZMYM2.

Its subcellular location is the nucleus. Its function is as follows. Transcriptional repressor that may play a role in the specification and differentiation of lung epithelium. May also play a role in developing neural, gastrointestinal and cardiovascular tissues. Can act with CTBP1 to synergistically repress transcription but CTPBP1 is not essential. Plays a role in synapse formation by regulating SRPX2 levels. The protein is Forkhead box protein P2 (Foxp2) of Rattus norvegicus (Rat).